The primary structure comprises 160 residues: MNIIQSGITAENSSIAIIIARFNEFINKNLLLGALDTLKRIGQVHEENILKIYVPGTYEIPTIASYIAKSGKYDAIIAIGTIIKGQTDHFKYIANDTSSSLSRISTQYFLPITLGILTTKNIEQSIERSGTKMGNKGSDAALAALEMINVMKKLKKVIYY.

Residues phenylalanine 22, 57-59 (TYE), and 81-83 (TII) contribute to the 5-amino-6-(D-ribitylamino)uracil site. Residue 86–87 (QT) coordinates (2S)-2-hydroxy-3-oxobutyl phosphate. The active-site Proton donor is the histidine 89. Position 114 (leucine 114) interacts with 5-amino-6-(D-ribitylamino)uracil. Arginine 128 is a (2S)-2-hydroxy-3-oxobutyl phosphate binding site.

This sequence belongs to the DMRL synthase family. As to quaternary structure, forms an icosahedral capsid composed of 60 subunits, arranged as a dodecamer of pentamers.

It carries out the reaction (2S)-2-hydroxy-3-oxobutyl phosphate + 5-amino-6-(D-ribitylamino)uracil = 6,7-dimethyl-8-(1-D-ribityl)lumazine + phosphate + 2 H2O + H(+). It participates in cofactor biosynthesis; riboflavin biosynthesis; riboflavin from 2-hydroxy-3-oxobutyl phosphate and 5-amino-6-(D-ribitylamino)uracil: step 1/2. In terms of biological role, catalyzes the formation of 6,7-dimethyl-8-ribityllumazine by condensation of 5-amino-6-(D-ribitylamino)uracil with 3,4-dihydroxy-2-butanone 4-phosphate. This is the penultimate step in the biosynthesis of riboflavin. This chain is 6,7-dimethyl-8-ribityllumazine synthase, found in Buchnera aphidicola subsp. Acyrthosiphon pisum (strain Tuc7).